Here is a 116-residue protein sequence, read N- to C-terminus: Transcription initiation factor IIA subunit 2 (116 aa).

Belongs to the TFIIA subunit 2 family. As to quaternary structure, TFIIA is a heterodimer composed of the large TOA1 and the small TOA2 subunits.

It is found in the nucleus. Its function is as follows. TFIIA is a component of the transcription machinery of RNA polymerase II and plays an important role in transcriptional activation. TFIIA in a complex with tbp mediates transcriptional activity. The sequence is that of Transcription initiation factor IIA subunit 2 (TOA2) from Pyricularia oryzae (strain 70-15 / ATCC MYA-4617 / FGSC 8958) (Rice blast fungus).